The primary structure comprises 181 residues: Adenylate kinase (181 aa).

10–15 (GAGKGT) contributes to the ATP binding site. The NMP stretch occupies residues 30 to 59 (STGDLFRYNISNGTELGLEAKKYLDAGDLV). Residues Thr31, Arg36, 57–59 (DLV), 85–88 (GYPR), and Gln92 each bind AMP. The tract at residues 126–132 (GRGRDDD) is LID. Residue Arg127 coordinates ATP. 2 residues coordinate AMP: Arg129 and Arg140. ATP is bound at residue Gly166.

Belongs to the adenylate kinase family. As to quaternary structure, monomer.

The protein resides in the cytoplasm. The enzyme catalyses AMP + ATP = 2 ADP. It functions in the pathway purine metabolism; AMP biosynthesis via salvage pathway; AMP from ADP: step 1/1. In terms of biological role, catalyzes the reversible transfer of the terminal phosphate group between ATP and AMP. Plays an important role in cellular energy homeostasis and in adenine nucleotide metabolism. The chain is Adenylate kinase from Mycolicibacterium vanbaalenii (strain DSM 7251 / JCM 13017 / BCRC 16820 / KCTC 9966 / NRRL B-24157 / PYR-1) (Mycobacterium vanbaalenii).